The sequence spans 427 residues: Trigger factor (427 aa).

The PPIase FKBP-type domain occupies 163-248 (GDTVVIDFVG…IHEVKTKEVP (86 aa)).

The protein belongs to the FKBP-type PPIase family. Tig subfamily.

The protein localises to the cytoplasm. The catalysed reaction is [protein]-peptidylproline (omega=180) = [protein]-peptidylproline (omega=0). Its function is as follows. Involved in protein export. Acts as a chaperone by maintaining the newly synthesized protein in an open conformation. Functions as a peptidyl-prolyl cis-trans isomerase. In Streptococcus pyogenes serotype M49 (strain NZ131), this protein is Trigger factor.